A 54-amino-acid polypeptide reads, in one-letter code: Chymosin (54 aa).

Residues 1–27 (SEITRVPLHKGKSLRKALKEHGLLEBF) constitute a propeptide, activation peptide.

It belongs to the peptidase A1 family. In terms of assembly, monomer.

It catalyses the reaction Broad specificity similar to that of pepsin A. Clots milk by cleavage of a single 104-Ser-Phe-|-Met-Ala-107 bond in kappa-chain of casein.. In terms of biological role, chymosin is synthesized in the mucosa of the stomach. The enzyme hydrolyzes casein to paracasein. This Felis catus (Cat) protein is Chymosin (CYM).